A 156-amino-acid chain; its full sequence is Low molecular weight protein-tyrosine-phosphatase YfkJ (156 aa).

Cys8 serves as the catalytic Nucleophile. The active site involves Arg14. Asp125 (proton donor) is an active-site residue.

This sequence belongs to the low molecular weight phosphotyrosine protein phosphatase family.

It catalyses the reaction O-phospho-L-tyrosyl-[protein] + H2O = L-tyrosyl-[protein] + phosphate. Its activity is regulated as follows. Efficiently inhibited by Cu(2+) ion, Zn(2+) ion and N-ethylmaleimide, while the addition of Mg(2+), Ca(2+) or Fe(3+) ions has minimal effect. Inhibited in a competitive manner by vanadate. Dephosphorylates the phosphotyrosine-containing proteins. Involved in ethanol stress resistance. The protein is Low molecular weight protein-tyrosine-phosphatase YfkJ (yfkJ) of Bacillus subtilis (strain 168).